The following is a 492-amino-acid chain: Protein PAIR1 (492 aa).

The stretch at V166–D186 forms a coiled coil. A Nuclear localization signal motif is present at residues K479–R483.

In terms of assembly, interacts with CRC1. Expressed in reproductive organs, but not in vegetative organs.

It localises to the nucleus. In terms of biological role, involved in spore formation. Plays an essential role in the establishment of homologous chromosome pairing in early meiosis. The polypeptide is Protein PAIR1 (PAIR1) (Oryza sativa subsp. japonica (Rice)).